Reading from the N-terminus, the 579-residue chain is Nuclear hormone receptor family member nhr-47 (579 aa).

Positions 8–83 (GTLCAVCDDI…VGMDKNSIQN (76 aa)) form a DNA-binding region, nuclear receptor. NR C4-type zinc fingers lie at residues 11–31 (CAVCDDIATGKHYSVASCNGC) and 47–71 (CQGNKDCPVNKGVRCACRYCRLQKC). The tract at residues 87–128 (RIGYTKRKRRHDDNDMEGGVHHSEHIRDGSSGSPQMNDESPE) is disordered. Positions 104–114 (GGVHHSEHIRD) are enriched in basic and acidic residues. The 390-residue stretch at 164–553 (ADLHSYATLE…SLVKETSLGP (390 aa)) folds into the NR LBD domain.

This sequence belongs to the nuclear hormone receptor family.

It is found in the nucleus. In terms of biological role, orphan nuclear receptor. The sequence is that of Nuclear hormone receptor family member nhr-47 (nhr-47) from Caenorhabditis elegans.